Reading from the N-terminus, the 406-residue chain is CRISP/Allergen/PR-1 (406 aa).

An N-terminal signal peptide occupies residues 1 to 18 (MHFQVILMMMWLWLEAEG). The N-linked (GlcNAc...) asparagine glycan is linked to Asn39. Positions 58–205 (LREHNKLRSR…TFKDLYTCNY (148 aa)) constitute an SCP domain.

The protein belongs to the CRISP family. In terms of processing, contains 9 disulfide bonds. In terms of tissue distribution, expressed by the venom gland.

It is found in the secreted. This chain is CRISP/Allergen/PR-1, found in Trittame loki (Brush-footed trapdoor spider).